A 419-amino-acid polypeptide reads, in one-letter code: UDP-N-acetylglucosamine 1-carboxyvinyltransferase (419 aa).

Position 22–23 (22–23 (KN)) interacts with phosphoenolpyruvate. Arg91 provides a ligand contact to UDP-N-acetyl-alpha-D-glucosamine. The active-site Proton donor is Cys115. Cys115 is subject to 2-(S-cysteinyl)pyruvic acid O-phosphothioketal. Residues 120 to 124 (RPVDL), 160 to 163 (KVSV), Asp305, and Val327 each bind UDP-N-acetyl-alpha-D-glucosamine.

Belongs to the EPSP synthase family. MurA subfamily.

It is found in the cytoplasm. It catalyses the reaction phosphoenolpyruvate + UDP-N-acetyl-alpha-D-glucosamine = UDP-N-acetyl-3-O-(1-carboxyvinyl)-alpha-D-glucosamine + phosphate. It participates in cell wall biogenesis; peptidoglycan biosynthesis. Its function is as follows. Cell wall formation. Adds enolpyruvyl to UDP-N-acetylglucosamine. This is UDP-N-acetylglucosamine 1-carboxyvinyltransferase from Salmonella arizonae (strain ATCC BAA-731 / CDC346-86 / RSK2980).